Consider the following 370-residue polypeptide: 1-propanol dehydrogenase PduQ (370 aa).

This sequence belongs to the iron-containing alcohol dehydrogenase family. As to quaternary structure, interacts with PduP, probably via the N-terminus of PduQ. Fe cation is required as a cofactor.

It localises to the bacterial microcompartment. The enzyme catalyses 1-propanol + NAD(+) = propanal + NADH + H(+). Its pathway is polyol metabolism; 1,2-propanediol degradation. Enzyme is oxygen sensitive. Functionally, an iron-dependent alcohol dehydrogenase required for optimal 1,2-propanediol (1,2-PD) degradation. NAD(+) and NADH are regenerated internally within the bacterial microcompartment (BMC) dedicated to 1,2-PD degradation by the PduP and PduQ enzymes, which reduce NAD(+) and oxidize NADH respectively, although there must also be cofactor transport across the BMC. The 1,2-PD-specific bacterial microcompartment (BMC) concentrates low levels of 1,2-PD catabolic enzymes, concentrates volatile reaction intermediates thus enhancing pathway flux and keeps the level of toxic, mutagenic propionaldehyde low. This chain is 1-propanol dehydrogenase PduQ, found in Salmonella typhimurium (strain LT2 / SGSC1412 / ATCC 700720).